Consider the following 415-residue polypeptide: Granaticin polyketide putative beta-ketoacyl synthase 2 (415 aa).

The Ketosynthase family 3 (KS3) domain occupies 6–406; that stretch reads RRRAVVTGLS…GFNSAVVVTL (401 aa).

The protein belongs to the thiolase-like superfamily. Beta-ketoacyl-ACP synthases family.

The protein operates within antibiotic biosynthesis; granaticin biosynthesis. The polypeptide is Granaticin polyketide putative beta-ketoacyl synthase 2 (gra-orf2) (Streptomyces violaceoruber).